A 275-amino-acid polypeptide reads, in one-letter code: MPLIKFKPTSPGRRSAARVVTPNIHKGSPHASLLESQSKTGGRNHHGRITVRHIGGGCKQRYRVIDFKRDKEAIPARVERIEYDPNRTAHIALLCYIDGERCYIIAPKGLKEGDKIISGPNVPIKLGNSLPLRNIPVGTTVHAVELKPRKGAQMARSAGSSVQLVAREGVYATLRLRSGEMRRVLAECRATIGEVGNEEHNLRKLGKAGAKRWLGVRPTVRGAAMNPVDHPHGGGEAKSGQGNPHPVTPWGVPTKGYKTRKNKRTQQFIIRGRRG.

2 disordered regions span residues 24 to 47 and 227 to 261; these read IHKG…NHHG and PVDH…KTRK.

Belongs to the universal ribosomal protein uL2 family. Part of the 50S ribosomal subunit. Forms a bridge to the 30S subunit in the 70S ribosome.

Functionally, one of the primary rRNA binding proteins. Required for association of the 30S and 50S subunits to form the 70S ribosome, for tRNA binding and peptide bond formation. It has been suggested to have peptidyltransferase activity; this is somewhat controversial. Makes several contacts with the 16S rRNA in the 70S ribosome. The protein is Large ribosomal subunit protein uL2 of Xylella fastidiosa (strain M12).